Consider the following 246-residue polypeptide: tRNA pseudouridine synthase A (246 aa).

Asp52 serves as the catalytic Nucleophile. Position 111 (Tyr111) interacts with substrate.

It belongs to the tRNA pseudouridine synthase TruA family. Homodimer.

It carries out the reaction uridine(38/39/40) in tRNA = pseudouridine(38/39/40) in tRNA. Functionally, formation of pseudouridine at positions 38, 39 and 40 in the anticodon stem and loop of transfer RNAs. This is tRNA pseudouridine synthase A from Ehrlichia ruminantium (strain Gardel).